We begin with the raw amino-acid sequence, 843 residues long: General transcription and DNA repair factor IIH helicase/translocase subunit XPB/SSL2 (843 aa).

The tract at residues 1–85 (MTDVEGYQPK…TAADSSMNQM (85 aa)) is disordered. Acidic residues predominate over residues 26–41 (SDEDSPATDAEIDENY). Residues 42-56 (DDNRETSEGRGERDT) show a composition bias toward basic and acidic residues. A compositionally biased stretch (basic residues) spans 64 to 74 (KKPRKKTKSSR). The Nuclear localization signal motif lies at 64 to 75 (KKPRKKTKSSRH). Positions 373 to 535 (MFGNGRARSG…DLNFLIGPKL (163 aa)) constitute a Helicase ATP-binding domain. Position 386–393 (386–393 (LPCGAGKT)) interacts with ATP. The DEAH box motif lies at 488 to 491 (DEVH). The 155-residue stretch at 589–743 (QACQFLIQYH…KVITHLHGME (155 aa)) folds into the Helicase C-terminal domain. At S752 the chain carries Phosphoserine.

It belongs to the helicase family. RAD25/XPB subfamily. As to quaternary structure, component of the 7-subunit TFIIH core complex composed of XPB/SSL2, XPD/RAD3, SSL1, TFB1, TFB2, TFB4 and TFB5, which is active in NER. The core complex associates with the 3-subunit CTD-kinase module TFIIK composed of CCL1, KIN28 and TFB3 to form the 10-subunit holoenzyme (holo-TFIIH) active in transcription. An additionnal subunit, TFB6, plays a role in the dissociation of the SSL2 helicase from TFIIH after transcription initiation. Interacts directly with TFB6. Mg(2+) is required as a cofactor.

The protein localises to the nucleus. The catalysed reaction is Couples ATP hydrolysis with the unwinding of duplex DNA by translocating in the 3'-5' direction.. The enzyme catalyses ATP + H2O = ADP + phosphate + H(+). Functionally, ATP-dependent DNA translocase. Component of the general transcription and DNA repair factor IIH (TFIIH) core complex. When complexed to CDK-activating kinase (CAK), involved in RNA transcription by RNA polymerase II. May have 3'-5' helicase activity alone, the TFIIH core however has no 3'-5' helicase activity. Also involved in transcription-coupled nucleotide excision repair (NER) of damaged DNA. In NER, TFIIH acts by opening DNA around the lesion to allow the excision of the damaged oligonucleotide and its replacement by a new DNA fragment. The ATPase activity of XPB/SSL2, but not its helicase activity, is required for DNA opening. In transcription, TFIIH has an essential role in transcription initiation. When the pre-initiation complex (PIC) has been established, TFIIH is required for promoter opening and promoter escape. The ATP-dependent helicase activity of XPB/SSL2 is required for promoter opening and promoter escape. XPB/SSL2 acts as a double-stranded DNA translocase, promoting DNA opening by tracking in a 5'-3' dirction along the nontemplate promoter strand, rotating and inserting DNA into the Pol II active site cleft, leading to DNA unwinding. A dsDNA-stimulated ATPase, dATP and ATP are equally good substrates. May also use this translocase mechanism during DNA repair rather than physically wedging open damaged DNA. In Saccharomyces cerevisiae (strain ATCC 204508 / S288c) (Baker's yeast), this protein is General transcription and DNA repair factor IIH helicase/translocase subunit XPB/SSL2.